The primary structure comprises 119 residues: Ribonuclease P protein component (119 aa).

The protein belongs to the RnpA family. In terms of assembly, consists of a catalytic RNA component (M1 or rnpB) and a protein subunit.

It catalyses the reaction Endonucleolytic cleavage of RNA, removing 5'-extranucleotides from tRNA precursor.. Functionally, RNaseP catalyzes the removal of the 5'-leader sequence from pre-tRNA to produce the mature 5'-terminus. It can also cleave other RNA substrates such as 4.5S RNA. The protein component plays an auxiliary but essential role in vivo by binding to the 5'-leader sequence and broadening the substrate specificity of the ribozyme. The protein is Ribonuclease P protein component of Salmonella schwarzengrund (strain CVM19633).